A 60-amino-acid chain; its full sequence is Hemocyte defensin Cg-Defh1 (60 aa).

The first 17 residues, 1–17, serve as a signal peptide directing secretion; the sequence is LFTLVVLLMVSADMAFA. Positions 19, 20, and 21 each coordinate beta-D-GlcNAc-(1-&gt;4)-Mur2Ac(oyl-L-Ala-gamma-D-Glu-L-Lys-D-Ala-D-Ala)-di-trans,octa-cis-undecaprenyl diphosphate. 4 disulfide bridges follow: C21–C42, C28–C51, C32–C53, and C37–C56. Residues 22-25 form a binds to membrane interface region; the sequence is PRDQ. A beta-D-GlcNAc-(1-&gt;4)-Mur2Ac(oyl-L-Ala-gamma-D-Glu-L-Lys-D-Ala-D-Ala)-di-trans,octa-cis-undecaprenyl diphosphate-binding site is contributed by H31. Residues 43-49 are binds to membrane interface; sequence DAVTLWL. C51 contributes to the beta-D-GlcNAc-(1-&gt;4)-Mur2Ac(oyl-L-Ala-gamma-D-Glu-L-Lys-D-Ala-D-Ala)-di-trans,octa-cis-undecaprenyl diphosphate binding site.

This sequence belongs to the invertebrate defensin family. As to expression, expressed in hemocytes.

It is found in the secreted. The protein localises to the target cell membrane. Antibacterial peptide mostly active against Gram-positive bacteria. It acts by selectively inhibiting peptidoglycan biosynthesis through complex formation with the cell wall precursor lipid II (1:1 molar ratio) thus inhibiting cell wall synthesis. It does not disrupt cell membranes. Is noticeably less potent than Cg-Defh2 and Cg-Defm. Shows no or limited activities against Gram-negative bacteria. This Magallana gigas (Pacific oyster) protein is Hemocyte defensin Cg-Defh1.